A 304-amino-acid polypeptide reads, in one-letter code: Acetylglutamate kinase (304 aa).

Residues 71-72, arginine 93, and asparagine 193 contribute to the substrate site; that span reads GG.

This sequence belongs to the acetylglutamate kinase family. ArgB subfamily.

Its subcellular location is the cytoplasm. The enzyme catalyses N-acetyl-L-glutamate + ATP = N-acetyl-L-glutamyl 5-phosphate + ADP. Its pathway is amino-acid biosynthesis; L-arginine biosynthesis; N(2)-acetyl-L-ornithine from L-glutamate: step 2/4. Functionally, catalyzes the ATP-dependent phosphorylation of N-acetyl-L-glutamate. The polypeptide is Acetylglutamate kinase (Streptomyces avermitilis (strain ATCC 31267 / DSM 46492 / JCM 5070 / NBRC 14893 / NCIMB 12804 / NRRL 8165 / MA-4680)).